The following is a 57-amino-acid chain: UPF0391 membrane protein RPE_2138 (57 aa).

The next 2 helical transmembrane spans lie at 4–24 (WVVT…GGIA) and 30–50 (IAKI…VIGL).

The protein belongs to the UPF0391 family.

The protein resides in the cell membrane. The sequence is that of UPF0391 membrane protein RPE_2138 from Rhodopseudomonas palustris (strain BisA53).